Consider the following 229-residue polypeptide: Imidazoleglycerol-phosphate dehydratase (229 aa).

The protein belongs to the imidazoleglycerol-phosphate dehydratase family.

It catalyses the reaction D-erythro-1-(imidazol-4-yl)glycerol 3-phosphate = 3-(imidazol-4-yl)-2-oxopropyl phosphate + H2O. Its pathway is amino-acid biosynthesis; L-histidine biosynthesis; L-histidine from 5-phospho-alpha-D-ribose 1-diphosphate: step 6/9. This is Imidazoleglycerol-phosphate dehydratase from Neurospora crassa (strain ATCC 24698 / 74-OR23-1A / CBS 708.71 / DSM 1257 / FGSC 987).